We begin with the raw amino-acid sequence, 1500 residues long: Carbamoyl-phosphate synthase [ammonia], mitochondrial (1500 aa).

Residues 1–38 (MTRILTAFKVVRTLKTGFGFTNVTAHQKWKFSRPGIRL) constitute a mitochondrion transit peptide. The interval 39–218 (LSVKAQTAHI…VKVYGKGNPT (180 aa)) is anthranilate phosphoribosyltransferase homolog. Residues lysine 55, lysine 57, and lysine 119 each carry the N6-acetyllysine; alternate modification. Lysine 55 bears the N6-glutaryllysine; alternate mark. Lysine 55, lysine 57, and lysine 119 each carry N6-succinyllysine; alternate. At serine 148 the chain carries Phosphoserine. 2 positions are modified to N6-acetyllysine; alternate: lysine 157 and lysine 171. Lysine 157 is modified (N6-succinyllysine; alternate). Lysine 171 carries the post-translational modification N6-glutaryllysine; alternate. Lysine 176 carries the N6-glutaryllysine modification. N6-acetyllysine is present on residues lysine 182 and lysine 197. 5 positions are modified to N6-acetyllysine; alternate: lysine 207, lysine 210, lysine 214, lysine 219, and lysine 228. 5 positions are modified to N6-glutaryllysine; alternate: lysine 207, lysine 210, lysine 214, lysine 219, and lysine 228. N6-succinyllysine; alternate is present on lysine 207. At lysine 214 the chain carries N6-succinyllysine; alternate. The 186-residue stretch at 219 to 404 (KVVAVDCGIK…FSLIKKGKAT (186 aa)) folds into the Glutamine amidotransferase type-1 domain. Lysine 237 is modified (N6-glutaryllysine). Residues lysine 280, lysine 287, lysine 307, and lysine 310 each carry the N6-acetyllysine; alternate modification. N6-glutaryllysine; alternate is present on lysine 280. Residues lysine 287 and lysine 307 each carry the N6-succinyllysine; alternate modification. N6-glutaryllysine; alternate occurs at positions 307 and 310. N6-succinyllysine is present on lysine 400. Residues lysine 402, lysine 412, lysine 453, and lysine 458 each carry the N6-glutaryllysine; alternate modification. Residues lysine 402 and lysine 412 each carry the N6-succinyllysine; alternate modification. 6 positions are modified to N6-acetyllysine; alternate: lysine 412, lysine 453, lysine 458, lysine 522, lysine 527, and lysine 532. Residues lysine 458, lysine 522, and lysine 527 each carry the N6-succinyllysine; alternate modification. Lysine 527 and lysine 532 each carry N6-glutaryllysine; alternate. Serine 537 bears the Phosphoserine; alternate mark. An O-linked (GlcNAc) serine; alternate glycan is attached at serine 537. Position 540 is a phosphoserine (serine 540). An ATP-grasp 1 domain is found at 551-743 (SDKLNEINEK…LAFIAAKIAL (193 aa)). An N6-acetyllysine; alternate mark is found at lysine 553 and lysine 560. At lysine 553 the chain carries N6-glutaryllysine; alternate. An N6-succinyllysine; alternate mark is found at lysine 553 and lysine 560. At serine 569 the chain carries Phosphoserine. An N6-acetyllysine; alternate mark is found at lysine 575 and lysine 612. Residues lysine 575 and lysine 612 each carry the N6-succinyllysine; alternate modification. N6-acetyllysine is present on lysine 630. Lysine 728 is subject to N6-glutaryllysine. N6-acetyllysine; alternate occurs at positions 751, 757, 772, 793, 811, and 831. 2 positions are modified to N6-succinyllysine; alternate: lysine 751 and lysine 757. An N6-glutaryllysine; alternate mark is found at lysine 757, lysine 772, lysine 793, and lysine 811. At lysine 793 the chain carries N6-succinyllysine; alternate. The residue at position 831 (lysine 831) is an N6-succinyllysine; alternate. Serine 835 bears the Phosphoserine mark. Residues lysine 841 and lysine 856 each carry the N6-acetyllysine; alternate modification. 2 positions are modified to N6-glutaryllysine; alternate: lysine 841 and lysine 856. An N6-glutaryllysine modification is found at lysine 869. N6-acetyllysine; alternate is present on residues lysine 875, lysine 889, and lysine 892. An N6-glutaryllysine; alternate mark is found at lysine 875, lysine 889, and lysine 892. Lysine 875, lysine 889, and lysine 892 each carry N6-succinyllysine; alternate. Phosphoserine is present on residues serine 896 and serine 898. The residue at position 905 (lysine 905) is an N6-glutaryllysine. 3 positions are modified to N6-acetyllysine; alternate: lysine 908, lysine 915, and lysine 919. Residues lysine 908, lysine 915, and lysine 919 each carry the N6-glutaryllysine; alternate modification. N6-succinyllysine; alternate is present on residues lysine 915 and lysine 919. The residue at position 935 (lysine 935) is an N6-acetyllysine. Serine 1036 carries the phosphoserine modification. Lysine 1074 carries the N6-acetyllysine; alternate modification. Lysine 1074 is subject to N6-glutaryllysine; alternate. Lysine 1074 is modified (N6-succinyllysine; alternate). A phosphoserine mark is found at serine 1079, serine 1090, and serine 1093. Positions 1093-1284 (SAVLDELKVA…FIDVATKVMI (192 aa)) constitute an ATP-grasp 2 domain. Lysine 1100 is subject to N6-acetyllysine; alternate. Lysine 1100 is subject to N6-succinyllysine; alternate. Residue lysine 1149 is modified to N6-succinyllysine. An N6-glutaryllysine modification is found at lysine 1150. N6-acetyllysine; alternate is present on residues lysine 1168 and lysine 1183. Lysine 1168 and lysine 1183 each carry N6-glutaryllysine; alternate. An N6-succinyllysine; alternate mark is found at lysine 1168 and lysine 1183. A Phosphoserine modification is found at serine 1203. Lysine 1222 bears the N6-acetyllysine mark. Position 1224 is an N6-glutaryllysine (lysine 1224). N6-acetyllysine; alternate occurs at positions 1232, 1269, and 1291. An N6-succinyllysine; alternate mark is found at lysine 1232, lysine 1269, and lysine 1291. An O-linked (GlcNAc) serine glycan is attached at serine 1331. Threonine 1332 carries an O-linked (GlcNAc) threonine glycan. An MGS-like domain is found at 1355–1500 (FKIPQKGILI…YRQYSAGKAA (146 aa)). Lysine 1356 bears the N6-acetyllysine; alternate mark. Lysine 1356 and lysine 1360 each carry N6-glutaryllysine; alternate. Residues lysine 1356 and lysine 1360 each carry the N6-succinyllysine; alternate modification. Threonine 1391, threonine 1394, and tryptophan 1410 together coordinate N-acetyl-L-glutamate. Residues serine 1419 and serine 1431 each carry the phosphoserine modification. Asparagine 1437 and asparagine 1440 together coordinate N-acetyl-L-glutamate. At lysine 1444 the chain carries N6-acetyllysine; alternate. Lysine 1444 is subject to N6-succinyllysine; alternate. Asparagine 1449 is an N-acetyl-L-glutamate binding site. Lysine 1471, lysine 1479, and lysine 1486 each carry N6-acetyllysine; alternate. Residues lysine 1471, lysine 1479, and lysine 1486 each carry the N6-succinyllysine; alternate modification. An N6-glutaryllysine; alternate mark is found at lysine 1479 and lysine 1486.

As to quaternary structure, can form homooligomers (monomers as predominant form and dimers). Undergoes proteolytic cleavage in the C-terminal region corresponding to the loss of approximately 12 AA residues from the C-terminus. Post-translationally, succinylated at Lys-287 and Lys-1291. Desuccinylated at Lys-1291 by SIRT5, leading to activation. In terms of processing, glutarylated. Glutarylation levels increase during fasting. Deglutarylated by SIRT5 at Lys-55, Lys-219, Lys-412, Lys-889, Lys-892, Lys-915, Lys-1360 and Lys-1486, leading to activation. In terms of tissue distribution, primarily in the liver and small intestine.

The protein localises to the mitochondrion. It is found in the nucleus. It localises to the nucleolus. The protein resides in the cell membrane. The enzyme catalyses hydrogencarbonate + NH4(+) + 2 ATP = carbamoyl phosphate + 2 ADP + phosphate + 2 H(+). Its activity is regulated as follows. Requires N-acetyl-L-glutamate (NAG) as an allosteric activator. Activated by glycerol in the absence of NAG, whereas in the presence of NAG it is inhibited by increasing concentrations of glycerol. Functionally, involved in the urea cycle of ureotelic animals where the enzyme plays an important role in removing excess ammonia from the cell. This is Carbamoyl-phosphate synthase [ammonia], mitochondrial (CPS1) from Homo sapiens (Human).